A 501-amino-acid polypeptide reads, in one-letter code: Prostacyclin synthase (501 aa).

The helical transmembrane segment at 1–21 (MSWAALLGLLAVLLLLLLLLS) threads the bilayer. Substrate-binding positions include Arg107, Leu113, Asn288, 359–360 (TR), and Arg383. Cys442 contributes to the heme binding site.

It belongs to the cytochrome P450 family. It depends on heme as a cofactor.

It is found in the endoplasmic reticulum membrane. The catalysed reaction is prostaglandin H2 = prostaglandin I2. It carries out the reaction a hydroperoxyeicosatetraenoate = an oxoeicosatetraenoate + H2O. The enzyme catalyses (15S)-hydroperoxy-(5Z,8Z,11Z,13E)-eicosatetraenoate = 15-oxo-(5Z,8Z,11Z,13E)-eicosatetraenoate + H2O. It catalyses the reaction (15S)-hydroperoxy-(5Z,8Z,11Z,13E)-eicosatetraenoate + AH2 = (15S)-hydroxy-(5Z,8Z,11Z,13E)-eicosatetraenoate + A + H2O. In terms of biological role, catalyzes the biosynthesis and metabolism of eicosanoids. Catalyzes the isomerization of prostaglandin H2 to prostacyclin (= prostaglandin I2), a potent mediator of vasodilation and inhibitor of platelet aggregation. Additionally, displays dehydratase activity, toward hydroperoxyeicosatetraenoates (HPETEs), especially toward (15S)-hydroperoxy-(5Z,8Z,11Z,13E)-eicosatetraenoate (15(S)-HPETE). The sequence is that of Prostacyclin synthase (Ptgis) from Rattus norvegicus (Rat).